Consider the following 338-residue polypeptide: Anthranilate phosphoribosyltransferase (338 aa).

5-phospho-alpha-D-ribose 1-diphosphate-binding positions include glycine 83, 86–87 (GD), serine 91, 93–96 (NCST), 111–119 (KHGNRAVSS), and alanine 123. Glycine 83 is an anthranilate binding site. Residue serine 95 coordinates Mg(2+). Position 114 (asparagine 114) interacts with anthranilate. Arginine 169 contributes to the anthranilate binding site. Residues aspartate 228 and glutamate 229 each contribute to the Mg(2+) site.

Belongs to the anthranilate phosphoribosyltransferase family. In terms of assembly, homodimer. It depends on Mg(2+) as a cofactor.

It carries out the reaction N-(5-phospho-beta-D-ribosyl)anthranilate + diphosphate = 5-phospho-alpha-D-ribose 1-diphosphate + anthranilate. It participates in amino-acid biosynthesis; L-tryptophan biosynthesis; L-tryptophan from chorismate: step 2/5. In terms of biological role, catalyzes the transfer of the phosphoribosyl group of 5-phosphorylribose-1-pyrophosphate (PRPP) to anthranilate to yield N-(5'-phosphoribosyl)-anthranilate (PRA). This chain is Anthranilate phosphoribosyltransferase, found in Nitratidesulfovibrio vulgaris (strain DSM 19637 / Miyazaki F) (Desulfovibrio vulgaris).